The sequence spans 448 residues: Tubulin beta chain (448 aa).

GTP is bound by residues Gln11, Glu69, Ser138, Gly142, Thr143, Gly144, Asn204, and Asn226. Residue Glu69 coordinates Mg(2+). A disordered region spans residues 425 to 448; the sequence is YQDASISEGEEEYLEEEEPLEHEE. The segment covering 432 to 448 has biased composition (acidic residues); the sequence is EGEEEYLEEEEPLEHEE.

This sequence belongs to the tubulin family. In terms of assembly, dimer of alpha and beta chains. A typical microtubule is a hollow water-filled tube with an outer diameter of 25 nm and an inner diameter of 15 nM. Alpha-beta heterodimers associate head-to-tail to form protofilaments running lengthwise along the microtubule wall with the beta-tubulin subunit facing the microtubule plus end conferring a structural polarity. Microtubules usually have 13 protofilaments but different protofilament numbers can be found in some organisms and specialized cells. The cofactor is Mg(2+).

Its subcellular location is the cytoplasm. It localises to the cytoskeleton. Tubulin is the major constituent of microtubules, a cylinder consisting of laterally associated linear protofilaments composed of alpha- and beta-tubulin heterodimers. Microtubules grow by the addition of GTP-tubulin dimers to the microtubule end, where a stabilizing cap forms. Below the cap, tubulin dimers are in GDP-bound state, owing to GTPase activity of alpha-tubulin. This chain is Tubulin beta chain, found in Aspergillus flavus.